A 417-amino-acid chain; its full sequence is MAEVRNYTFNFGPQHPAAHGVLRLIVEVDGEVIQRIDPHIGLLHRATEKLAESKPYNQTIGYMDRLDYVSMMANEHGYVLAIEKLLGIEPPIRAKYIRTMFDEITRILNHLLWLGAHALDVGAMTVFLYCFREREDLMDCYEAVSGARMHATYYRPGGVYRDLPDSMPKYKPSRWHNEKAVKKMNEAREGSLLDFIWDFTARFPNLIDEYESLLTDNRIWKQRTVGIGVVSAERALQLGFTGPMLRASGVEWDLRKKQPYAAYDRVDFDIPIGREGDCYDRYLVRIEEMRQSNRIIRQCVEWLRKNPGPVMIDDYKIVPPQREVMKRDMEALIHHFKLFTEGYIVPEGEAYAAVEQPKGEFGVYIVSDGANKPYRVKVRAASYPHLAAMNEMCRGHMIADLVAIISSIDIVFGEIDR.

The protein belongs to the complex I 49 kDa subunit family. As to quaternary structure, NDH-1 is composed of 14 different subunits. Subunits NuoB, C, D, E, F, and G constitute the peripheral sector of the complex.

It localises to the cell inner membrane. It catalyses the reaction a quinone + NADH + 5 H(+)(in) = a quinol + NAD(+) + 4 H(+)(out). NDH-1 shuttles electrons from NADH, via FMN and iron-sulfur (Fe-S) centers, to quinones in the respiratory chain. The immediate electron acceptor for the enzyme in this species is believed to be ubiquinone. Couples the redox reaction to proton translocation (for every two electrons transferred, four hydrogen ions are translocated across the cytoplasmic membrane), and thus conserves the redox energy in a proton gradient. In Coxiella burnetii (strain CbuG_Q212) (Coxiella burnetii (strain Q212)), this protein is NADH-quinone oxidoreductase subunit D.